Reading from the N-terminus, the 229-residue chain is N-(5'-phosphoribosyl)anthranilate isomerase (229 aa).

This sequence belongs to the TrpF family.

It carries out the reaction N-(5-phospho-beta-D-ribosyl)anthranilate = 1-(2-carboxyphenylamino)-1-deoxy-D-ribulose 5-phosphate. It participates in amino-acid biosynthesis; L-tryptophan biosynthesis; L-tryptophan from chorismate: step 3/5. The polypeptide is N-(5'-phosphoribosyl)anthranilate isomerase (Clostridium beijerinckii (strain ATCC 51743 / NCIMB 8052) (Clostridium acetobutylicum)).